Consider the following 103-residue polypeptide: MVRYRTRSLSERPHEVHGQQVHGQDQGHNGQEEQGLSPEHVEVYERTHQGHSHHRRRRCSQRRLHRIHRRRHRSCRRRRRRSCRHRRRHRRGCRTRRRRCRRY.

A disordered region spans residues 1-103 (MVRYRTRSLS…RTRRRRCRRY (103 aa)). A phosphoserine mark is found at Ser8 and Ser10. Residues 8-17 (SLSERPHEVH) show a composition bias toward basic and acidic residues. A compositionally biased stretch (low complexity) spans 18–29 (GQQVHGQDQGHN). The residue at position 37 (Ser37) is a Phosphoserine. Basic and acidic residues predominate over residues 39 to 48 (EHVEVYERTH). The segment covering 49-103 (QGHSHHRRRRCSQRRLHRIHRRRHRSCRRRRRRSCRHRRRHRRGCRTRRRRCRRY) has biased composition (basic residues).

This sequence belongs to the protamine P2 family. In terms of assembly, interacts with TDRP. Proteolytic processing into mature chains is required for histone eviction during spermatogenesis. Transition proteins (TNP1 and TNP2) are required for processing. In terms of tissue distribution, testis.

Its subcellular location is the nucleus. The protein resides in the chromosome. Its function is as follows. Protamines substitute for histones in the chromatin of sperm during the haploid phase of spermatogenesis. They compact sperm DNA into a highly condensed, stable and inactive complex. The chain is Protamine-2 (PRM2) from Erythrocebus patas (Red guenon).